We begin with the raw amino-acid sequence, 145 residues long: Putative esterase PA1618 (145 aa).

The protein belongs to the thioesterase PaaI family.

The protein is Putative esterase PA1618 of Pseudomonas aeruginosa (strain ATCC 15692 / DSM 22644 / CIP 104116 / JCM 14847 / LMG 12228 / 1C / PRS 101 / PAO1).